Reading from the N-terminus, the 300-residue chain is Ribosomal protein L11 methyltransferase (300 aa).

Residues Thr141, Gly164, Asp186, and Asn233 each contribute to the S-adenosyl-L-methionine site.

The protein belongs to the methyltransferase superfamily. PrmA family.

The protein localises to the cytoplasm. It carries out the reaction L-lysyl-[protein] + 3 S-adenosyl-L-methionine = N(6),N(6),N(6)-trimethyl-L-lysyl-[protein] + 3 S-adenosyl-L-homocysteine + 3 H(+). Its function is as follows. Methylates ribosomal protein L11. This chain is Ribosomal protein L11 methyltransferase, found in Synechocystis sp. (strain ATCC 27184 / PCC 6803 / Kazusa).